The chain runs to 144 residues: Large ribosomal subunit protein uL14 (144 aa).

It belongs to the universal ribosomal protein uL14 family. In terms of assembly, part of the 50S ribosomal subunit. Forms a cluster with proteins L3 and L24e, part of which may contact the 16S rRNA in 2 intersubunit bridges.

Functionally, binds to 23S rRNA. Forms part of two intersubunit bridges in the 70S ribosome. This chain is Large ribosomal subunit protein uL14, found in Cenarchaeum symbiosum (strain A).